A 598-amino-acid chain; its full sequence is MPETHQNTLTWKGTRLPAGEACNGCRERKRRCVRRKRELPCLSCQAENRPCDVSRYRRRRRRRRGPNKRNCKSLRVLGGQSAEPFNMHQQPDTDSCSEIQHGIETDECGSQCRIPSQSPGPYPEPQPAASTYSLCLPSYVTGVPKHLALVTLNALREKGAFTLPPAEIQTYLISSYIMHVHPDMPFLDLERLLEAVILRCRGRQTSMLLLQAVMFAGSIFLDPVYLHLMGYTSRRAAMRDLFGRAKLLYECGFEVQPTYKLQSLLLFTLFHEDDLAGSSFWMGEAWNLAKTIGLQYDLQEVPVDESSSELAFRRRLWWCVYTRDRLLALSTRSAMHISDGDYNVPMLALADFKSCFGTAEAYRALQLDSDLRTDGTKTALALTFIYKTKLSQLIGRVLMSQYTIGSASPTTMLYYPRPTPISLSDFLGMENDLDVWETSLPSLLEFPLPLLSPVSQAEKIIYAQRAMLHMIYLTCINALHRPWSSSAQPTSSDPWEGAFRDLSAWKIEYASQAILMIATHLHSIGLTNFLADTAVPSLLSAMITHIVRLNSDILVAPEANAVCFVQGWECLQGLREKYEWARHAAAFIRFTTRSLRTG.

The zn(2)-C6 fungal-type DNA-binding region spans 22-51 (CNGCRERKRRCVRRKRELPCLSCQAENRPC).

The protein resides in the nucleus. In terms of biological role, transcription factor; part of the gene cluster that mediates the biosynthesis of the fungal neurotoxin cyclopiazonic acid (CPA), a nanomolar inhibitor of Ca(2+)-ATPase with a unique pentacyclic indole tetramic acid scaffold. The chain is Transcription factor cpaR from Aspergillus oryzae (Yellow koji mold).